A 1085-amino-acid chain; its full sequence is RecBCD enzyme subunit RecC (1085 aa).

Belongs to the RecC family. As to quaternary structure, heterotrimer of RecB, RecC and RecD. All subunits contribute to DNA-binding.

In terms of biological role, a helicase/nuclease that prepares dsDNA breaks (DSB) for recombinational DNA repair. Binds to DSBs and unwinds DNA via a highly rapid and processive ATP-dependent bidirectional helicase activity. Holoenzyme degrades any linearized DNA that is unable to undergo homologous recombination. In the holoenzyme this subunit recognizes the wild-type Chi sequence, and when added to isolated RecB increases its ATP-dependent helicase processivity. Unlike the case in E.coli, suppresses RecA-dependent homologous recombination, is instead required for single-strand annealing pathway repair of DSB. This is RecBCD enzyme subunit RecC from Mycolicibacterium smegmatis (strain ATCC 700084 / mc(2)155) (Mycobacterium smegmatis).